Here is a 309-residue protein sequence, read N- to C-terminus: Aspartate carbamoyltransferase catalytic subunit (309 aa).

Carbamoyl phosphate-binding residues include arginine 58 and threonine 59. Lysine 86 is a binding site for L-aspartate. Positions 108, 136, and 139 each coordinate carbamoyl phosphate. Residues arginine 170 and arginine 224 each coordinate L-aspartate. The carbamoyl phosphate site is built by glycine 266 and proline 267.

This sequence belongs to the aspartate/ornithine carbamoyltransferase superfamily. ATCase family. As to quaternary structure, heterododecamer (2C3:3R2) of six catalytic PyrB chains organized as two trimers (C3), and six regulatory PyrI chains organized as three dimers (R2).

It catalyses the reaction carbamoyl phosphate + L-aspartate = N-carbamoyl-L-aspartate + phosphate + H(+). It functions in the pathway pyrimidine metabolism; UMP biosynthesis via de novo pathway; (S)-dihydroorotate from bicarbonate: step 2/3. In terms of biological role, catalyzes the condensation of carbamoyl phosphate and aspartate to form carbamoyl aspartate and inorganic phosphate, the committed step in the de novo pyrimidine nucleotide biosynthesis pathway. This chain is Aspartate carbamoyltransferase catalytic subunit, found in Campylobacter concisus (strain 13826).